A 251-amino-acid chain; its full sequence is Urease accessory protein UreF (251 aa).

Residues Met-1 to Ala-20 form a disordered region. Residues Pro-9–Ala-20 show a composition bias toward low complexity.

This sequence belongs to the UreF family. As to quaternary structure, ureD, UreF and UreG form a complex that acts as a GTP-hydrolysis-dependent molecular chaperone, activating the urease apoprotein by helping to assemble the nickel containing metallocenter of UreC. The UreE protein probably delivers the nickel.

It localises to the cytoplasm. Required for maturation of urease via the functional incorporation of the urease nickel metallocenter. The chain is Urease accessory protein UreF from Paracidovorax citrulli (strain AAC00-1) (Acidovorax citrulli).